The sequence spans 411 residues: Dihydrolipoyllysine-residue succinyltransferase component of 2-oxoglutarate dehydrogenase complex (411 aa).

Residues 2–77 (TTEIRVPTLG…EVNALLGAVE (76 aa)) form the Lipoyl-binding domain. Lys43 carries the post-translational modification N6-lipoyllysine. Over residues 82–100 (SVAKSPSSSETSVSAAPSE) the composition is skewed to low complexity. Residues 82–115 (SVAKSPSSSETSVSAAPSELEQSSSSNTMPPAPS) are disordered. A compositionally biased stretch (polar residues) spans 101–110 (LEQSSSSNTM). The Peripheral subunit-binding (PSBD) domain occupies 111–148 (PPAPSAAKLMAENNIAKSDILGSGKRGQILKEDVLNVL). Catalysis depends on residues His382 and Asp386.

Belongs to the 2-oxoacid dehydrogenase family. As to quaternary structure, forms a 24-polypeptide structural core with octahedral symmetry. Part of the 2-oxoglutarate dehydrogenase (OGDH) complex composed of E1 (2-oxoglutarate dehydrogenase), E2 (dihydrolipoamide succinyltransferase) and E3 (dihydrolipoamide dehydrogenase); the complex contains multiple copies of the three enzymatic components (E1, E2 and E3). (R)-lipoate serves as cofactor.

It catalyses the reaction N(6)-[(R)-dihydrolipoyl]-L-lysyl-[protein] + succinyl-CoA = N(6)-[(R)-S(8)-succinyldihydrolipoyl]-L-lysyl-[protein] + CoA. Its pathway is amino-acid degradation; L-lysine degradation via saccharopine pathway; glutaryl-CoA from L-lysine: step 6/6. E2 component of the 2-oxoglutarate dehydrogenase (OGDH) complex which catalyzes the second step in the conversion of 2-oxoglutarate to succinyl-CoA and CO(2). This chain is Dihydrolipoyllysine-residue succinyltransferase component of 2-oxoglutarate dehydrogenase complex (sucB), found in Bartonella vinsonii subsp. berkhoffii.